The following is a 374-amino-acid chain: DNA integrity scanning protein DisA (374 aa).

Residues 20 to 158 (DGLMRASLSA…DGMRRVLEDS (139 aa)) form the DAC domain. ATP-binding positions include Gly-87, Leu-105, and 118 to 122 (TRHRT).

Belongs to the DisA family. As to quaternary structure, homooctamer. Requires Mg(2+) as cofactor.

It catalyses the reaction 2 ATP = 3',3'-c-di-AMP + 2 diphosphate. In terms of biological role, participates in a DNA-damage check-point that is active prior to asymmetric division when DNA is damaged. DisA forms globular foci that rapidly scan along the chromosomes during sporulation, searching for lesions. When a lesion is present, DisA pauses at the lesion site. This triggers a cellular response that culminates in a temporary block in sporulation initiation. Also has diadenylate cyclase activity, catalyzing the condensation of 2 ATP molecules into cyclic di-AMP (c-di-AMP). c-di-AMP acts as a signaling molecule that couples DNA integrity with progression of sporulation. The rise in c-di-AMP level generated by DisA while scanning the chromosome, operates as a positive signal that advances sporulation; upon encountering a lesion, the DisA focus arrests at the damaged site and halts c-di-AMP synthesis. This chain is DNA integrity scanning protein DisA, found in Streptomyces avermitilis (strain ATCC 31267 / DSM 46492 / JCM 5070 / NBRC 14893 / NCIMB 12804 / NRRL 8165 / MA-4680).